The primary structure comprises 352 residues: UPF0324 membrane protein blr3189 (352 aa).

A run of 11 helical transmembrane segments spans residues 21–43, 53–71, 88–110, 114–136, 143–165, 175–197, 204–226, 236–253, 265–284, 294–316, and 329–351; these read IAAL…LLER, YVEA…RSFW, LLEV…ASGI, ASIA…LLGL, LIAC…IIGA, SFTA…LLQL, ILAG…AGLV, LMRV…SLVA, VGFF…LATL, VVGP…LGLG, and VTAA…VHWF.

Belongs to the UPF0324 family.

The protein resides in the cell membrane. The protein is UPF0324 membrane protein blr3189 of Bradyrhizobium diazoefficiens (strain JCM 10833 / BCRC 13528 / IAM 13628 / NBRC 14792 / USDA 110).